Here is a 251-residue protein sequence, read N- to C-terminus: Probable transcriptional regulatory protein Mflv_3828 (251 aa).

This sequence belongs to the TACO1 family.

Its subcellular location is the cytoplasm. In Mycolicibacterium gilvum (strain PYR-GCK) (Mycobacterium gilvum (strain PYR-GCK)), this protein is Probable transcriptional regulatory protein Mflv_3828.